Reading from the N-terminus, the 401-residue chain is Probable tRNA sulfurtransferase (401 aa).

Positions threonine 63 to arginine 168 constitute a THUMP domain. Residues leucine 186–leucine 187, tyrosine 211–phenylalanine 212, arginine 268, glycine 290, and glutamine 299 each bind ATP.

The protein belongs to the ThiI family.

It localises to the cytoplasm. It carries out the reaction [ThiI sulfur-carrier protein]-S-sulfanyl-L-cysteine + a uridine in tRNA + 2 reduced [2Fe-2S]-[ferredoxin] + ATP + H(+) = [ThiI sulfur-carrier protein]-L-cysteine + a 4-thiouridine in tRNA + 2 oxidized [2Fe-2S]-[ferredoxin] + AMP + diphosphate. The enzyme catalyses [ThiS sulfur-carrier protein]-C-terminal Gly-Gly-AMP + S-sulfanyl-L-cysteinyl-[cysteine desulfurase] + AH2 = [ThiS sulfur-carrier protein]-C-terminal-Gly-aminoethanethioate + L-cysteinyl-[cysteine desulfurase] + A + AMP + 2 H(+). Its pathway is cofactor biosynthesis; thiamine diphosphate biosynthesis. Its function is as follows. Catalyzes the ATP-dependent transfer of a sulfur to tRNA to produce 4-thiouridine in position 8 of tRNAs, which functions as a near-UV photosensor. Also catalyzes the transfer of sulfur to the sulfur carrier protein ThiS, forming ThiS-thiocarboxylate. This is a step in the synthesis of thiazole, in the thiamine biosynthesis pathway. The sulfur is donated as persulfide by IscS. This chain is Probable tRNA sulfurtransferase, found in Treponema pallidum subsp. pallidum (strain SS14).